Consider the following 135-residue polypeptide: MVKIRLRRAGRKKMPVYQIVAADARAPRDGKFLEVIGRYQPTAKPHSITIDKERVEYWLGVGAQPTTTAQSLLRATGLLYEMNLKRKGRSEEEIVSEMAQWQERQSARLQKRLAVKARRRQAKKDAQAAAAASAE.

The protein belongs to the bacterial ribosomal protein bS16 family.

This chain is Small ribosomal subunit protein bS16, found in Prosthecochloris aestuarii (strain DSM 271 / SK 413).